The sequence spans 398 residues: Lysophosphatidylserine lipase ABHD12 (398 aa).

The span at 1 to 15 (MRKRTEPVTLEHERC) shows a compositional bias: basic and acidic residues. Residues 1-24 (MRKRTEPVTLEHERCAASGSSSSG) form a disordered region. The Cytoplasmic segment spans residues 1-74 (MRKRTEPVTL…RKSLWFRLRK (74 aa)). The helical transmembrane segment at 75 to 95 (ILLCVLGFYIAIPFLVKLCPG) threads the bilayer. At 96-398 (IQAKLIFLNF…LGKSEPERQH (303 aa)) the chain is on the extracellular side. Residue asparagine 123 is glycosylated (N-linked (GlcNAc...) asparagine). The active-site Nucleophile is serine 246. Active-site charge relay system residues include aspartate 333 and histidine 372.

The protein belongs to the serine esterase family. Post-translationally, glycosylated.

The protein localises to the endoplasmic reticulum membrane. It localises to the mitochondrion. It carries out the reaction 1-(9Z-octadecenoyl)-sn-glycero-3-phospho-L-serine + H2O = sn-glycero-3-phospho-L-serine + (9Z)-octadecenoate + H(+). The enzyme catalyses 1-(9Z-octadecenoyl)-sn-glycero-3-phospho-(1'-sn-glycerol) + H2O = sn-glycero-3-phospho-(1'-sn-glycerol) + (9Z)-octadecenoate + H(+). The catalysed reaction is 1-(9Z-octadecenoyl)-sn-glycero-3-phospho-(1D-myo-inositol) + H2O = sn-glycero-3-phospho-1D-myo-inositol + (9Z)-octadecenoate + H(+). It catalyses the reaction 1-(9Z-octadecenoyl)-sn-glycero-3-phosphoethanolamine + H2O = sn-glycero-3-phosphoethanolamine + (9Z)-octadecenoate + H(+). It carries out the reaction 1-(9Z-octadecenoyl)-sn-glycero-3-phosphocholine + H2O = 1-(9Z-octadecenoyl)-sn-glycerol + phosphocholine + H(+). The enzyme catalyses 2-(9Z-octadecenoyl)-glycerol + H2O = glycerol + (9Z)-octadecenoate + H(+). The catalysed reaction is 1-hexadecanoyl-sn-glycero-3-phospho-L-serine + H2O = sn-glycero-3-phospho-L-serine + hexadecanoate + H(+). It catalyses the reaction 2-(5Z,8Z,11Z,14Z-eicosatetraenoyl)-glycerol + H2O = glycerol + (5Z,8Z,11Z,14Z)-eicosatetraenoate + H(+). It carries out the reaction Hydrolyzes glycerol monoesters of long-chain fatty acids.. The enzyme catalyses 1-decanoylglycerol + H2O = decanoate + glycerol + H(+). The catalysed reaction is 1-dodecanoylglycerol + H2O = dodecanoate + glycerol + H(+). It catalyses the reaction 1-tetradecanoylglycerol + H2O = tetradecanoate + glycerol + H(+). It carries out the reaction 2-hexadecanoylglycerol + H2O = glycerol + hexadecanoate + H(+). The enzyme catalyses 1-(9Z-octadecenoyl)-glycerol + H2O = glycerol + (9Z)-octadecenoate + H(+). The catalysed reaction is 2-(9Z,12Z-octadecadienoyl)-glycerol + H2O = (9Z,12Z)-octadecadienoate + glycerol + H(+). It catalyses the reaction 1-(5Z,8Z,11Z,14Z-eicosatetraenoyl)-glycerol + H2O = glycerol + (5Z,8Z,11Z,14Z)-eicosatetraenoate + H(+). It carries out the reaction 1-(9Z,12Z-octadecadienoyl)-glycerol + H2O = (9Z,12Z)-octadecadienoate + glycerol + H(+). The enzyme catalyses 1-hexadecanoylglycerol + H2O = glycerol + hexadecanoate + H(+). The catalysed reaction is 1-octadecanoylglycerol + H2O = octadecanoate + glycerol + H(+). It catalyses the reaction 1-octadecanoyl-2-(9,10-epoxyoctadecanoyl)-sn-glycero-3-phospho-L-serine + H2O = 9,10-epoxyoctadecanoate + 1-octadecanoyl-sn-glycero-3-phosphoserine + H(+). It carries out the reaction 1-octadecanoyl-2-(10-hydroxyoctadecanoyl)-sn-glycero-3-phospho-L-serine + H2O = 1-octadecanoyl-sn-glycero-3-phosphoserine + 10-hydroxyoctadecanoate + H(+). The enzyme catalyses 1-hexadecanoyl-2-(10-hydroxyoctadecanoyl)-sn-glycero-3-phospho-L-serine + H2O = 10-hydroxyoctadecanoate + 1-hexadecanoyl-sn-glycero-3-phospho-L-serine + H(+). With respect to regulation, selectively inhibited by DO264 (N-3-pyridyl-N'-(1-[3-chloro-4-{2-chloro-4-(trifluoromethoxy)phenoxy}pyridine-2-yl]piperidin-4-yl)thiourea). In terms of biological role, lysophosphatidylserine (LPS) lipase that mediates the hydrolysis of lysophosphatidylserine, a class of signaling lipids that regulates immunological and neurological processes. Represents a major lysophosphatidylserine lipase in the brain, thereby playing a key role in the central nervous system. Also able to hydrolyze oxidized phosphatidylserine; oxidized phosphatidylserine is produced in response to severe inflammatory stress and constitutes a proapoptotic 'eat me' signal. Also has monoacylglycerol (MAG) lipase activity: hydrolyzes 2-arachidonoylglycerol (2-AG), thereby acting as a regulator of endocannabinoid signaling pathways. Has a strong preference for very-long-chain lipid substrates; substrate specificity is likely due to improved catalysis and not improved substrate binding. This Mus musculus (Mouse) protein is Lysophosphatidylserine lipase ABHD12.